Here is an 86-residue protein sequence, read N- to C-terminus: MSIDTQKVIEDNKRSSADTGSPEVQVALLTARIELLTGHFKTHKKDHHSRRGLLQMVNRRRSLLDYLKKKDVERYKALIEKLGLRR.

The segment at 1–22 is disordered; it reads MSIDTQKVIEDNKRSSADTGSP. A compositionally biased stretch (basic and acidic residues) spans 7–16; it reads KVIEDNKRSS.

This sequence belongs to the universal ribosomal protein uS15 family. Part of the 30S ribosomal subunit. Forms a bridge to the 50S subunit in the 70S ribosome, contacting the 23S rRNA.

In terms of biological role, one of the primary rRNA binding proteins, it binds directly to 16S rRNA where it helps nucleate assembly of the platform of the 30S subunit by binding and bridging several RNA helices of the 16S rRNA. Its function is as follows. Forms an intersubunit bridge (bridge B4) with the 23S rRNA of the 50S subunit in the ribosome. In Stenotrophomonas maltophilia (strain R551-3), this protein is Small ribosomal subunit protein uS15.